Consider the following 198-residue polypeptide: NAD(P)H dehydrogenase (quinone) (198 aa).

Residues 4-189 enclose the Flavodoxin-like domain; sequence ILVLYYSMYG…AIARYQGEHV (186 aa). FMN contacts are provided by residues 10–15 and 78–80; these read SMYGHI and TRF. Residue tyrosine 12 coordinates NAD(+). Substrate is bound at residue tryptophan 98. FMN-binding positions include 113–118 and histidine 133; that span reads STGTGG.

It belongs to the WrbA family. It depends on FMN as a cofactor.

It carries out the reaction a quinone + NADH + H(+) = a quinol + NAD(+). The enzyme catalyses a quinone + NADPH + H(+) = a quinol + NADP(+). The chain is NAD(P)H dehydrogenase (quinone) from Klebsiella pneumoniae (strain 342).